A 185-amino-acid chain; its full sequence is DAN domain family member 5 (185 aa).

The signal sequence occupies residues 1 to 23; sequence MFRSQFTTLLGLFSGAWLPTGSG. N-linked (GlcNAc...) asparagine glycosylation is present at asparagine 39. 4 disulfide bridges follow: cysteine 97–cysteine 144, cysteine 111–cysteine 158, cysteine 121–cysteine 179, and cysteine 125–cysteine 181. The region spanning 97 to 182 is the CTCK domain; sequence CKALSFVQVI…TVLVQKCQCR (86 aa).

This sequence belongs to the DAN family. Expressed throughout the neural retina and in the photoreceptor nuclear layer. In the retina, widely expressed in inner nuclear layer, as well as in the ganglion cell layer.

The protein localises to the secreted. Antagonist of the extracellular signaling protein NODAL, which is required for correct left-right patterning during embryonic development. Antagonist of BMP4 signaling. Antagonist of TGF-beta signaling. Independently of its role in left-right axis establishment, plays a role during heart development, possibly through the regulation of TGF-beta/Nodal signaling pathway. Displays anti-angiogenic activity by inhibiting endothelial sprouting, migration, and proliferation. Once internalized by endothelial cells, may alter their redox and glycolytic balance. This Mus musculus (Mouse) protein is DAN domain family member 5 (Dand5).